Reading from the N-terminus, the 194-residue chain is Protein GrpE (194 aa).

The segment at 1 to 40 (MSRKHHKEQEEIQEQETISAGAAETPAEETAAIPAATEAD) is disordered. The span at 20-38 (AGAAETPAEETAAIPAATE) shows a compositional bias: low complexity.

This sequence belongs to the GrpE family. Homodimer.

It localises to the cytoplasm. Participates actively in the response to hyperosmotic and heat shock by preventing the aggregation of stress-denatured proteins, in association with DnaK and GrpE. It is the nucleotide exchange factor for DnaK and may function as a thermosensor. Unfolded proteins bind initially to DnaJ; upon interaction with the DnaJ-bound protein, DnaK hydrolyzes its bound ATP, resulting in the formation of a stable complex. GrpE releases ADP from DnaK; ATP binding to DnaK triggers the release of the substrate protein, thus completing the reaction cycle. Several rounds of ATP-dependent interactions between DnaJ, DnaK and GrpE are required for fully efficient folding. This is Protein GrpE from Chlorobaculum tepidum (strain ATCC 49652 / DSM 12025 / NBRC 103806 / TLS) (Chlorobium tepidum).